The following is a 383-amino-acid chain: MRDVAVIGVSQTKFGELWDVSFRDMITEAGLGAIEDAGVEGADLDAMYVGNMSAGLFIKQEHISSLIADHAGLTPIPSTRVEAACASGGLALRSGIMAVASGYHDIVIAAGVEKMTDVVDPTPAIATASDQEWEAQQGVTFPSLYAMMARRHMYEYGTTREQLAMVSVINHENASNNPRAQFPMKVTVEQVMNSTMVADPLRLLDCSPISDGAAAVILCPADMAREYTDTPVYVKASAQASGTIALHDRRDITRIDATVNAARNAFKMAKLTPGDIDLVEVHDCFSINGILAVEDLGFVEKGEGGRAFEDGMTRIDGDIPVNPSGGLKARGHPLGATGIAQAAEVVWQLRGEAGKRQVEGAEIGMTHNIGGTGGTAAVHIFSR.

C85 (acyl-thioester intermediate) is an active-site residue. CoA is bound by residues C206, S207, I209, and K328. Residue H332 is the Proton acceptor of the active site.

The protein belongs to the thiolase-like superfamily. Thiolase family. As to quaternary structure, interacts with HMG-CoA synthase (HMGCS) that catalyzes the second step in the pathway and with a DUF35 protein. The acetoacetyl-CoA thiolase/HMG-CoA synthase complex channels the intermediate via a fused CoA-binding site, which allows for efficient coupling of the endergonic thiolase reaction with the exergonic HMGCS reaction.

It catalyses the reaction 2 acetyl-CoA = acetoacetyl-CoA + CoA. The protein operates within metabolic intermediate biosynthesis; (R)-mevalonate biosynthesis; (R)-mevalonate from acetyl-CoA: step 1/3. Its function is as follows. Catalyzes the condensation of two acetyl-coA molecules into acetoacetyl-CoA. Functions in the mevalonate (MVA) pathway leading to isopentenyl diphosphate (IPP), a key precursor for the biosynthesis of isoprenoid compounds that are building blocks of archaeal membrane lipids. This is Acetyl-CoA acetyltransferase from Methanothermobacter thermautotrophicus (strain ATCC 29096 / DSM 1053 / JCM 10044 / NBRC 100330 / Delta H) (Methanobacterium thermoautotrophicum).